The chain runs to 333 residues: Ornithine carbamoyltransferase (333 aa).

Carbamoyl phosphate contacts are provided by residues 56–59 (STRT), Arg-107, and 134–137 (HPTQ). L-ornithine-binding positions include Asn-167, Asp-231, and 235 to 236 (SM). Carbamoyl phosphate is bound by residues 273–274 (CL) and Arg-318.

This sequence belongs to the aspartate/ornithine carbamoyltransferase superfamily. OTCase family.

The protein resides in the cytoplasm. The catalysed reaction is carbamoyl phosphate + L-ornithine = L-citrulline + phosphate + H(+). It functions in the pathway amino-acid degradation; L-arginine degradation via ADI pathway; carbamoyl phosphate from L-arginine: step 2/2. Functionally, reversibly catalyzes the transfer of the carbamoyl group from carbamoyl phosphate (CP) to the N(epsilon) atom of ornithine (ORN) to produce L-citrulline. The protein is Ornithine carbamoyltransferase of Clostridium botulinum (strain 657 / Type Ba4).